A 570-amino-acid polypeptide reads, in one-letter code: Double-stranded RNA-binding protein Staufen homolog 2 (570 aa).

Residues 8–75 (TAMCLVNELA…ANKALTESTL (68 aa)) enclose the DRBM 1 domain. Disordered regions lie at residues 71-94 (TESTLPKPVQKPPKSNVNNNPGSI) and 181-203 (NEPIPERSPQNGESGKDVDDDKD). Positions 83 to 94 (PKSNVNNNPGSI) are enriched in polar residues. The region spanning 95–181 (TPTVELNGLA…AMKALQALQN (87 aa)) is the DRBM 2 domain. S188 carries the phosphoserine modification. Basic and acidic residues predominate over residues 194–203 (SGKDVDDDKD). 2 DRBM domains span residues 207 to 274 (SEIS…ELKK) and 307 to 375 (NPIS…QLGY). 2 short sequence motifs (nuclear localization signal) span residues 273 to 291 (KKLPPLPVVEKPKLFFKKR) and 373 to 412 (LGYKASTNLQDQLEKTGENKGWSGPKPGFPEPTNNTPKGI). Positions 381 to 570 (LQDQLEKTGE…QDCKKSNSAV (190 aa)) are required for dendritic transport. Residues 387–409 (KTGENKGWSGPKPGFPEPTNNTP) are disordered. S395 carries the post-translational modification Phosphoserine. The residue at position 405 (T405) is a Phosphothreonine. Phosphoserine is present on residues S416, S426, S440, S455, and S492. Positions 528–570 (DGAMNIEKGSLEKQAKHLREKADNNQAPPGSIAQDCKKSNSAV) are disordered. Residues 536 to 550 (GSLEKQAKHLREKAD) are compositionally biased toward basic and acidic residues.

In terms of assembly, interacts with the exportin XPO5. This requires RNA and RAN bound to GTP. Interacts with microtubules. Isoform 2 and isoform 3 may also interact with ribosomes, and this association is independent of translation. Identified in a mRNP complex, at least composed of DHX9, DDX3X, ELAVL1, HNRNPU, IGF2BP1, ILF3, PABPC1, PCBP2, PTBP2, STAU1, STAU2, SYNCRIP and YBX1. Interacts with TRIM71 (via NHL repeats) in an RNA-dependent manner.

The protein resides in the cytoplasm. Its subcellular location is the nucleus. It is found in the nucleolus. It localises to the endoplasmic reticulum. RNA-binding protein required for the microtubule-dependent transport of neuronal RNA from the cell body to the dendrite. As protein synthesis occurs within the dendrite, the localization of specific mRNAs to dendrites may be a prerequisite for neurite outgrowth and plasticity at sites distant from the cell body. The sequence is that of Double-stranded RNA-binding protein Staufen homolog 2 (STAU2) from Homo sapiens (Human).